An 837-amino-acid chain; its full sequence is V-type proton ATPase 116 kDa subunit a 1 (837 aa).

At 1–388 (MGELFRSEEM…DAYGIGTYRE (388 aa)) the chain is on the cytoplasmic side. Residues Thr-250 and Thr-360 each carry the phosphothreonine modification. Tyr-364 is subject to Phosphotyrosine. Residues 389 to 407 (INPAPYTIITFPFLFAVMF) traverse the membrane as a helical segment. Topologically, residues 408-409 (GD) are vacuolar. A helical transmembrane segment spans residues 410–426 (FGHGILMTLFAVWMVLR). At 427–441 (ESRILSQKNENEMFS) the chain is on the cytoplasmic side. Residues 442–471 (TVFSGRYIILLMGVFSMYTGLIYNDCFSKS) form a helical membrane-spanning segment. The Vacuolar segment spans residues 472-534 (LNIFGSSWSV…ATNKLTFLNS (63 aa)). A helical membrane pass occupies residues 535 to 554 (FKMKMSVILGIIHMLFGVSL). At 555–572 (SLFNHIYFKKPLNIYFGF) the chain is on the cytoplasmic side. The helical transmembrane segment at 573–593 (IPEIIFMTSLFGYLVILIFYK) threads the bilayer. Residues 594 to 638 (WTAYDAHTSENAPSLLIHFINMFLFSYPESGYSMLYSGQKGIQCF) lie on the Vacuolar side of the membrane. The chain crosses the membrane as a helical span at residues 639 to 658 (LVVVALLCVPWMLLFKPLVL). At 659-724 (RRQYLRRKHL…ATMVHQAIHT (66 aa)) the chain is on the cytoplasmic side. Residues 725–749 (IEYCLGCISNTASYLRLWALSLAHA) form a helical membrane-spanning segment. Topologically, residues 750–770 (QLSEVLWTMVIHIGLSVKSLA) are vacuolar. The helical transmembrane segment at 771–809 (GGLVLFFFFTAFATLTVAILLIMEGLSAFLHALRLHWVE) threads the bilayer. The Cytoplasmic portion of the chain corresponds to 810–837 (FQNKFYSGTGFKFLPFSFEHIREGKFGE).

This sequence belongs to the V-ATPase 116 kDa subunit family. As to quaternary structure, V-ATPase is a heteromultimeric enzyme made up of two complexes: the ATP-hydrolytic V1 complex and the proton translocation V0 complex. The V1 complex consists of three catalytic AB heterodimers that form a heterohexamer, three peripheral stalks each consisting of EG heterodimers, one central rotor including subunits D and F, and the regulatory subunits C and H. The proton translocation complex V0 consists of the proton transport subunit a, a ring of proteolipid subunits c9c'', rotary subunit d, subunits e and f, and the accessory subunits ATP6AP1/Ac45 and ATP6AP2/PRR. Interacts with SPAAR.

The protein resides in the cytoplasmic vesicle. It is found in the clathrin-coated vesicle membrane. The protein localises to the secretory vesicle. Its subcellular location is the synaptic vesicle membrane. It localises to the melanosome. Its function is as follows. Subunit of the V0 complex of vacuolar(H+)-ATPase (V-ATPase), a multisubunit enzyme composed of a peripheral complex (V1) that hydrolyzes ATP and a membrane integral complex (V0) that translocates protons. V-ATPase is responsible for the acidification of various organelles, such as lysosomes, endosomes, the trans-Golgi network, and secretory granules, including synaptic vesicles. In certain cell types, can be exported to the plasma membrane, where it is involved in the acidification of the extracellular environment. Required for assembly and activity of the vacuolar ATPase. Through its action on compartment acidification, plays an essential role in neuronal development in terms of integrity and connectivity of neurons. The polypeptide is V-type proton ATPase 116 kDa subunit a 1 (ATP6V0A1) (Pongo abelii (Sumatran orangutan)).